The primary structure comprises 208 residues: Thymidylate kinase (208 aa).

10–17 (GGEGAGKS) contributes to the ATP binding site.

Belongs to the thymidylate kinase family.

It carries out the reaction dTMP + ATP = dTDP + ADP. Functionally, phosphorylation of dTMP to form dTDP in both de novo and salvage pathways of dTTP synthesis. The chain is Thymidylate kinase from Alcanivorax borkumensis (strain ATCC 700651 / DSM 11573 / NCIMB 13689 / SK2).